The sequence spans 274 residues: 3-methyl-2-oxobutanoate hydroxymethyltransferase (274 aa).

Mg(2+) contacts are provided by D49 and D88. 3-methyl-2-oxobutanoate-binding positions include 49–50 (DS), D88, and K118. Residue E120 coordinates Mg(2+). The active-site Proton acceptor is E187.

It belongs to the PanB family. As to quaternary structure, homodecamer; pentamer of dimers. The cofactor is Mg(2+).

The protein resides in the cytoplasm. The catalysed reaction is 3-methyl-2-oxobutanoate + (6R)-5,10-methylene-5,6,7,8-tetrahydrofolate + H2O = 2-dehydropantoate + (6S)-5,6,7,8-tetrahydrofolate. It functions in the pathway cofactor biosynthesis; (R)-pantothenate biosynthesis; (R)-pantoate from 3-methyl-2-oxobutanoate: step 1/2. Its function is as follows. Catalyzes the reversible reaction in which hydroxymethyl group from 5,10-methylenetetrahydrofolate is transferred onto alpha-ketoisovalerate to form ketopantoate. In Paramagnetospirillum magneticum (strain ATCC 700264 / AMB-1) (Magnetospirillum magneticum), this protein is 3-methyl-2-oxobutanoate hydroxymethyltransferase.